The chain runs to 1337 residues: MEYPQIDLYEFLTESELQQYYNAVKNELKITNAAQFKYAADEDLRFIGLSRPEIRRLRKFYEKHFPHSYLSKIKRLLQAPGTMVKREEAPGGGSQVALDGSSASACSSLAAKNGASSPSKVPNNKHIIPADSISVNKQLGTGEFGIVQQGVWSNGNERIQVAIKCLCRERMQSNPMEFLKEAAIMHSIEHENIVRLYGVVLATDSLMLVTELAHLRSLLECLKDSGLRVSFLTIPTLCEFALQICNGMRYLEQKRLIHRDLAARNILVFSKDKVKISDFGLSRALGVGKDYYKTNFNVNLKLPIAWCAPECINYLRFTNASDVWAFGVCLWEMFSYGFQPWAALTGLQILEAIDAPNYQRLEQPDCCPSEYYTLMMKCWQDDAAKRPRFGEIYDQLPDMKPEQLKAVVNCTEPKKDHLLYRQGDIISVLDRNTGTPFWKGVLSTGKTGYFNPSNTVAFLEGLPSSTRDSFSRVSDHRISKRKLRTEMISKPQNDFKHTGHVGIDGATFGDIAFLGSSQNYNHVPKQIVTPYKPSEDIEQTPLLLPPTPTSPDSLQTASGYFPEGANSGGAMGTSMNPTFIPSAEHTPKLIATNGQSSFDFASGSTNPFFPNRGDDELEFGLHNYGADGKSVHSETGWRPTSRSIVDDPHEYHEISDDEIAADKLDFGPSLLDEINSMFGSISAATGSHPKSPGFDHVNNKNEITEMSAKLGQKSGDTNGNKHGHGLLPTLSKKKSSGTVKPISVKDEKILNHAIEIANEISARSMIDLVSDQTPVIHSPKRKFSFRFPHLSNNGSGDKSGGLGTSGSAHTPTHGNASPFPKKKNFTEELQSIPDIQSLIGKEGLEAYNSLIERKALLDIGPSPAATLLRHLDTDEFDLQSLHQSQRPMTLPTRGATQRVRKAELAAGLSRHNDENSNSLEACESPSYMTHGSYKFPEAQPTEQLPEPESPNPIPLPPREGKKQVKTSTKRHVRKYPLIIPANGLQRTLSKLADFGDEAAKSPEISTSSQPQPGRAIEVVAAVRPSGMRRPSRPSEREYENMPTVGKESAHTYQNLDKLTPADAAGLTDTASLQFESIMEADTSKEGILQSPDVTDGFYNFSIQKEHYNKGKDAEFEATQISGLYVNDDELRNLDIESSRRTATPCSSCSALESEHSQPDALPSTESVSEVSRFSSVDNELAGNALFKKVRASVNMAMNRKSVAETSLTSNQPGGASAKPQTEAEYFAATAARLADSNSVSCEDLLEFSDKKPKGCERGVDSDEVRIMVKVLGKDSTPNRCLGALEFINWDVHKSIKLIKLQNLVSEANLSLEASFEALQQHEWDLHTTAHKLNGLKL.

Ser71 carries the post-translational modification Phosphoserine. Residues 133–399 form the Protein kinase domain; sequence ISVNKQLGTG…GEIYDQLPDM (267 aa). ATP is bound by residues 139-147 and Lys164; that span reads LGTGEFGIV. Asp260 functions as the Proton acceptor in the catalytic mechanism. 2 positions are modified to phosphotyrosine: Tyr291 and Tyr292. One can recognise an SH3 domain in the interval 399-460; it reads MKPEQLKAVV…NPSNTVAFLE (62 aa). The region spanning 488 to 502 is the CRIB domain; sequence ISKPQNDFKHTGHVG. The disordered stretch occupies residues 714 to 739; it reads SGDTNGNKHGHGLLPTLSKKKSSGTV. A phosphoserine mark is found at Ser764 and Ser778. A disordered region spans residues 786 to 822; the sequence is RFPHLSNNGSGDKSGGLGTSGSAHTPTHGNASPFPKK. The span at 805–815 shows a compositional bias: polar residues; the sequence is SGSAHTPTHGN. Phosphoserine occurs at positions 831, 918, and 924. Disordered regions lie at residues 906–969 and 1024–1045; these read AGLS…TSTK and PSGM…PTVG. Over residues 947-957 the composition is skewed to pro residues; it reads PESPNPIPLPP.

The protein belongs to the protein kinase superfamily. Tyr protein kinase family.

The catalysed reaction is L-tyrosyl-[protein] + ATP = O-phospho-L-tyrosyl-[protein] + ADP + H(+). Likely to act as a downstream effector of Cdc42 during dorsal closure, acting in a kinase independent manner with the other ACK family member Ack to positively regulate expression of the myosin zip by promoting the endocytosis of Egfr in the amnioserosa (AS). The sequence is that of Activated Cdc42 kinase-like from Drosophila melanogaster (Fruit fly).